A 101-amino-acid polypeptide reads, in one-letter code: Biogenesis of lysosome-related organelles complex 1 subunit SNN1 (101 aa).

Positions 62–100 form a coiled coil; the sequence is DSNEYKAQFKEVNNLQKRLQKITLRLKDLERRSSQLTTS.

The protein belongs to the SNAPIN family. In terms of assembly, component of the biogenesis of lysosome-related organelles complex-1 (BLOC-1).

It is found in the endosome. Its function is as follows. Component of the biogenesis of lysosome-related organelles complex-1 (BLOC-1), a complex involved in endosomal cargo sorting. This is Biogenesis of lysosome-related organelles complex 1 subunit SNN1 (SNN1) from Candida glabrata (strain ATCC 2001 / BCRC 20586 / JCM 3761 / NBRC 0622 / NRRL Y-65 / CBS 138) (Yeast).